The sequence spans 474 residues: Tumor necrosis factor receptor superfamily member 1B (474 aa).

The first 22 residues, 1–22, serve as a signal peptide directing secretion; it reads MAPAALWVALVFELQLWATGHT. Residues 23–258 are Extracellular-facing; it reads VPAQVVLTPY…PIIEQSTKGG (236 aa). T30 carries an O-linked (GalNAc...) threonine glycan. TNFR-Cys repeat units follow at residues 39-77, 78-119, 120-164, and 165-203; these read ECQI…TVCA, DCEA…NRVC, ACEA…VLCK, and ACAP…AVCA. 10 cysteine pairs are disulfide-bonded: C40-C54, C55-C68, C58-C76, C79-C94, C97-C111, C101-C119, C121-C127, C136-C145, C139-C163, and C166-C181. The N-linked (GlcNAc...) asparagine glycan is linked to N69. N-linked (GlcNAc...) asparagine glycosylation occurs at N195. T208 and T224 each carry an O-linked (GalNAc...) threonine glycan. Positions 220 to 243 are disordered; sequence QPEPTRSQPLDQEPGPSQTPSILT. Residues 259–288 traverse the membrane as a helical segment; it reads ISLPIGLIVGVTSLGLLMLGLVNCIILVQR. The Cytoplasmic portion of the chain corresponds to 289–474; the sequence is KKKPSCLQRD…WFDQIAVKVA (186 aa). Disordered regions lie at residues 295–314, 321–378, and 397–463; these read LQRD…DAVG, LTTA…GSHG, and SQCS…PSQA. A compositionally biased stretch (basic and acidic residues) spans 297–310; that stretch reads RDAKVPHVPDEKSQ. 2 stretches are compositionally biased toward low complexity: residues 324–338 and 363–378; these read APSS…SASA and ARAS…GSHG. Position 331 is a phosphoserine (S331). The span at 429–442 shows a compositional bias: polar residues; the sequence is ECPSQSPCETTETL.

In terms of assembly, binds to TRAF2. Interacts with BMX. Interacts (activated form) with XPNPEP3.

It is found in the membrane. Its function is as follows. Receptor with high affinity for TNFSF2/TNF-alpha and approximately 5-fold lower affinity for homotrimeric TNFSF1/lymphotoxin-alpha. The TRAF1/TRAF2 complex recruits the apoptotic suppressors BIRC2 and BIRC3 to TNFRSF1B/TNFR2. This Mus musculus (Mouse) protein is Tumor necrosis factor receptor superfamily member 1B (Tnfrsf1b).